A 256-amino-acid polypeptide reads, in one-letter code: Nuclear shuttle protein (256 aa).

A Bipartite nuclear localization signal motif is present at residues N21–V42. The Nuclear localization signal signature appears at Q81–L96. Residues E150–D187 form an interaction with Arabidopsis thaliana NSI protein region.

Belongs to the begomovirus nuclear shuttle protein family. As to quaternary structure, binds to single-stranded and double-stranded viral DNA. Interacts with the host nuclear shuttle interacting (NSI) protein. This interaction may allow NSP to recruit NSI monomers to the viral genome and thus regulate nuclear export of viral genome by NSP.

Its subcellular location is the host nucleus. The protein localises to the host cytoplasm. It is found in the host cell membrane. In terms of biological role, binds to the genomic viral ssDNA, shuttles it into and out of the cell nucleus. Begomoviruses use 2 proteins to transport their DNA from cell to cell. The nuclear shuttle protein (NSP) shuttles it between nucleus and cytoplasm and the movement protein (MP) probably transports the DNA-NSP complex to the cell periphery and facilitates movement across the cell wall. This Pepper huasteco yellow vein virus (PHYVV) protein is Nuclear shuttle protein.